Consider the following 704-residue polypeptide: Mannan-binding lectin serine protease 1 (704 aa).

The signal sequence occupies residues 1–24 (MRFLSFRRLLLYHVLCLTLTEVSA). In terms of domain architecture, CUB 1 spans 25–143 (HTVELNEMFG…TGFDAHYMAV (119 aa)). A homodimerization region spans residues 25-189 (HTVELNEMFG…HTDNRTCRVE (165 aa)). The interaction with MBL2 stretch occupies residues 25 to 189 (HTVELNEMFG…HTDNRTCRVE (165 aa)). The segment at 25 to 283 (HTVELNEMFG…STQSHSIQIL (259 aa)) is interaction with FCN2. The segment at 25–305 (HTVELNEMFG…RLSYRAAGNE (281 aa)) is interaction with MBL1. The N-linked (GlcNAc...) asparagine glycan is linked to Asn54. Positions 73, 81, 126, 128, 144, 145, and 147 each coordinate Ca(2+). Residues Cys78 and Cys96 are joined by a disulfide bond. The EGF-like; calcium-binding domain maps to 144 to 187 (DVDECKEREDEELSCDHYCHNYIGGYYCSCRFGYILHTDNRTCR). 4 cysteine pairs are disulfide-bonded: Cys148-Cys162, Cys158-Cys171, Cys173-Cys186, and Cys190-Cys217. Ca(2+) is bound by residues Asn164, Tyr165, and Gly168. Asn164 is subject to (3R)-3-hydroxyasparagine. Asn183 carries an N-linked (GlcNAc...) asparagine glycan. Residues 190–302 (CSGNLFTQRT…RGWRLSYRAA (113 aa)) enclose the CUB 2 domain. Glu240, Asp250, Asp287, and Ser289 together coordinate Ca(2+). Cysteines 247 and 265 form a disulfide. 2 consecutive Sushi domains span residues 304–369 (NECP…TCKI) and 370–439 (VDCG…TCLP). 6 cysteine pairs are disulfide-bonded: Cys306–Cys354, Cys334–Cys367, Cys372–Cys419, Cys402–Cys437, Cys441–Cys577, and Cys480–Cys496. 2 N-linked (GlcNAc...) asparagine glycosylation sites follow: Asn390 and Asn412. One can recognise a Peptidase S1 domain in the interval 454–701 (IFNGRPAQKG…NKDWIQRVTG (248 aa)). The active-site Charge relay system is His495. An N-linked (GlcNAc...) asparagine glycan is attached at Leu538. Catalysis depends on Asp557, which acts as the Charge relay system. Glu604 is a glycosylation site (N-linked (GlcNAc...) asparagine). 2 disulfide bridges follow: Cys619/Cys636 and Cys647/Cys677. Ser651 serves as the catalytic Charge relay system.

Belongs to the peptidase S1 family. Homodimer. Interacts with the oligomeric lectins MBL2, FCN2 and FCN3; triggers the lectin pathway of complement through activation of C3. Interacts with SERPING1. Interacts with COLEC11; probably triggers the lectin pathway of complement. In terms of processing, the iron and 2-oxoglutarate dependent 3-hydroxylation of aspartate and asparagine is (R) stereospecific within EGF domains. N-glycosylated. Some N-linked glycan are of the complex-type. Post-translationally, autoproteolytic processing of the proenzyme produces the active enzyme composed on the heavy and the light chain held together by a disulfide bond. Isoform 1 but not isoform 2 is activated through autoproteolytic processing. As to expression, protein of the plasma which is primarily expressed by liver.

The protein localises to the secreted. Inhibited by SERPING1 and A2M. Its function is as follows. Functions in the lectin pathway of complement, which performs a key role in innate immunity by recognizing pathogens through patterns of sugar moieties and neutralizing them. The lectin pathway is triggered upon binding of mannan-binding lectin (MBL) and ficolins to sugar moieties which leads to activation of the associated proteases MASP1 and MASP2. Functions as an endopeptidase and may activate MASP2 or C2 or directly activate C3 the key component of complement reaction. Isoform 2 may have an inhibitory effect on the activation of the lectin pathway of complement or may cleave IGFBP5. Also plays a role in development. This Rattus norvegicus (Rat) protein is Mannan-binding lectin serine protease 1 (Masp1).